Consider the following 216-residue polypeptide: Superoxide dismutase [Cu-Zn], chloroplastic (216 aa).

A chloroplast-targeting transit peptide spans 1-62; sequence MACHSALAAV…ASPRSMVVVA (62 aa). The Cu cation site is built by H108, H110, and H125. A disulfide bond links C119 and C208. H125, H133, H142, and D145 together coordinate Zn(2+). Cu cation is bound at residue H182.

It belongs to the Cu-Zn superoxide dismutase family. Homotetramer. The cofactor is Cu cation. Zn(2+) serves as cofactor.

The protein resides in the plastid. Its subcellular location is the chloroplast. It carries out the reaction 2 superoxide + 2 H(+) = H2O2 + O2. Destroys radicals which are normally produced within the cells and which are toxic to biological systems. This Zantedeschia aethiopica (White calla lily) protein is Superoxide dismutase [Cu-Zn], chloroplastic (SODCP).